Here is a 273-residue protein sequence, read N- to C-terminus: Polyamine aminopropyltransferase (273 aa).

Positions 5–238 (ENWFSERYSD…GFWSFTIASE (234 aa)) constitute a PABS domain. Glutamine 34 serves as a coordination point for S-methyl-5'-thioadenosine. Histidine 65 and aspartate 90 together coordinate spermidine. S-methyl-5'-thioadenosine contacts are provided by residues glutamate 109 and 140–141 (DG). Aspartate 158 acts as the Proton acceptor in catalysis. Residue 158 to 161 (DSTD) coordinates spermidine. Residue proline 165 participates in S-methyl-5'-thioadenosine binding.

The protein belongs to the spermidine/spermine synthase family. As to quaternary structure, homodimer or homotetramer.

It localises to the cytoplasm. It carries out the reaction S-adenosyl 3-(methylsulfanyl)propylamine + putrescine = S-methyl-5'-thioadenosine + spermidine + H(+). It participates in amine and polyamine biosynthesis; spermidine biosynthesis; spermidine from putrescine: step 1/1. Functionally, catalyzes the irreversible transfer of a propylamine group from the amino donor S-adenosylmethioninamine (decarboxy-AdoMet) to putrescine (1,4-diaminobutane) to yield spermidine. The polypeptide is Polyamine aminopropyltransferase (Thermoplasma volcanium (strain ATCC 51530 / DSM 4299 / JCM 9571 / NBRC 15438 / GSS1)).